Here is a 269-residue protein sequence, read N- to C-terminus: Peptide deformylase 1B, chloroplastic (269 aa).

Residues 1–51 (MAARLHLRLGPRLRGFASSFAPLLAAHPRALPLSRMGSVAPLAAARARRGF) constitute a chloroplast transit peptide. Fe cation contacts are provided by Cys168 and His210. The active site involves Glu211. His214 contacts Fe cation.

It belongs to the polypeptide deformylase family. In terms of assembly, homodimer. It depends on Fe(2+) as a cofactor. As to expression, mainly expressed in mature leaves and sheaths.

The protein resides in the plastid. It is found in the chloroplast stroma. The protein localises to the mitochondrion. It catalyses the reaction N-terminal N-formyl-L-methionyl-[peptide] + H2O = N-terminal L-methionyl-[peptide] + formate. Its activity is regulated as follows. Inhibited by actinonin. In terms of biological role, removes the formyl group from the N-terminal Met of newly synthesized proteins. This chain is Peptide deformylase 1B, chloroplastic (PDF1B), found in Oryza sativa subsp. japonica (Rice).